The primary structure comprises 251 residues: Imidazole glycerol phosphate synthase subunit HisF (251 aa).

Active-site residues include D11 and D130.

It belongs to the HisA/HisF family. Heterodimer of HisH and HisF.

It localises to the cytoplasm. The enzyme catalyses 5-[(5-phospho-1-deoxy-D-ribulos-1-ylimino)methylamino]-1-(5-phospho-beta-D-ribosyl)imidazole-4-carboxamide + L-glutamine = D-erythro-1-(imidazol-4-yl)glycerol 3-phosphate + 5-amino-1-(5-phospho-beta-D-ribosyl)imidazole-4-carboxamide + L-glutamate + H(+). It participates in amino-acid biosynthesis; L-histidine biosynthesis; L-histidine from 5-phospho-alpha-D-ribose 1-diphosphate: step 5/9. IGPS catalyzes the conversion of PRFAR and glutamine to IGP, AICAR and glutamate. The HisF subunit catalyzes the cyclization activity that produces IGP and AICAR from PRFAR using the ammonia provided by the HisH subunit. The chain is Imidazole glycerol phosphate synthase subunit HisF from Chlorobium phaeobacteroides (strain BS1).